We begin with the raw amino-acid sequence, 287 residues long: Mitochondrial dicarboxylate carrier (287 aa).

Solcar repeat units lie at residues 7–87, 100–187, and 196–279; these read SRWY…MRDY, NKVL…AKQL, and DNIF…LRKH. A run of 3 helical transmembrane segments spans residues 9-29, 62-81, and 102-122; these read WYFG…LDLL, GLSA…FAIY, and VLLG…ADLV. At Lys158 the chain carries N6-acetyllysine. A run of 3 helical transmembrane segments spans residues 162–181, 202–222, and 254–274; these read GATM…LSCY, FVSS…LDVL, and GLFP…MFLE.

This sequence belongs to the mitochondrial carrier (TC 2.A.29) family. In terms of tissue distribution, expressed at very high levels in white adipose tissue. And at low levels in brown adipose tissue, kidney and liver.

Its subcellular location is the mitochondrion inner membrane. It carries out the reaction (S)-malate(in) + phosphate(out) = (S)-malate(out) + phosphate(in). It catalyses the reaction malonate(out) + (S)-malate(in) = malonate(in) + (S)-malate(out). The enzyme catalyses (S)-malate(in) + succinate(out) = (S)-malate(out) + succinate(in). The catalysed reaction is (S)-malate(in) + sulfate(out) = (S)-malate(out) + sulfate(in). It carries out the reaction malonate(out) + phosphate(in) = malonate(in) + phosphate(out). It catalyses the reaction succinate(out) + phosphate(in) = succinate(in) + phosphate(out). The enzyme catalyses sulfate(out) + phosphate(in) = sulfate(in) + phosphate(out). The catalysed reaction is malonate(out) + succinate(in) = malonate(in) + succinate(out). With respect to regulation, regulated by circadian protein CLOCK (Circadian Locomotor Output Cycles Kaput). Catalyzes the electroneutral exchange or flux of physiologically important metabolites such as dicarboxylates (malonate, malate, succinate), inorganic sulfur-containing anions, and phosphate, across mitochondrial inner membrane. Plays an important role in gluconeogenesis, fatty acid metabolism, urea synthesis, and sulfur metabolism, particularly in liver, by supplying the substrates for the different metabolic processes. Regulates fatty acid release from adipocytes, and contributes to systemic insulin sensitivity. The protein is Mitochondrial dicarboxylate carrier of Mus musculus (Mouse).